The following is a 278-amino-acid chain: Tropomyosin A (278 aa).

Residues 1–270 adopt a coiled-coil conformation; that stretch reads IMMAMKLEKE…YRAISGELDT (270 aa). Residues 92–134 are disordered; sequence DFEQSSGRLTETSTKLDDASKAAEESERNRKTLETRSISDDER. Over residues 95-104 the composition is skewed to polar residues; the sequence is QSSGRLTETS. The segment covering 105-134 has biased composition (basic and acidic residues); sequence TKLDDASKAAEESERNRKTLETRSISDDER.

It belongs to the tropomyosin family. As to quaternary structure, homodimer.

Functionally, tropomyosin, in association with the troponin complex, plays a central role in the calcium dependent regulation of muscle contraction. This is Tropomyosin A from Echinococcus granulosus (Hydatid tapeworm).